Reading from the N-terminus, the 269-residue chain is Tryptophan synthase alpha chain (269 aa).

Residues Glu-49 and Asp-60 each act as proton acceptor in the active site.

This sequence belongs to the TrpA family. In terms of assembly, tetramer of two alpha and two beta chains.

The catalysed reaction is (1S,2R)-1-C-(indol-3-yl)glycerol 3-phosphate + L-serine = D-glyceraldehyde 3-phosphate + L-tryptophan + H2O. The protein operates within amino-acid biosynthesis; L-tryptophan biosynthesis; L-tryptophan from chorismate: step 5/5. In terms of biological role, the alpha subunit is responsible for the aldol cleavage of indoleglycerol phosphate to indole and glyceraldehyde 3-phosphate. This is Tryptophan synthase alpha chain from Pseudomonas fluorescens (strain SBW25).